A 183-amino-acid chain; its full sequence is Small ribosomal subunit protein bS20c (183 aa).

The transit peptide at M1 to C68 directs the protein to the chloroplast. The segment at A79–E99 is disordered.

As to quaternary structure, component of the chloroplast small ribosomal subunit (SSU). Mature 70S chloroplast ribosomes of higher plants consist of a small (30S) and a large (50S) subunit. The 30S small subunit contains 1 molecule of ribosomal RNA (16S rRNA) and 24 different proteins. The 50S large subunit contains 3 rRNA molecules (23S, 5S and 4.5S rRNA) and 33 different proteins.

The protein resides in the plastid. The protein localises to the chloroplast. Functionally, component of the chloroplast ribosome (chloro-ribosome), a dedicated translation machinery responsible for the synthesis of chloroplast genome-encoded proteins, including proteins of the transcription and translation machinery and components of the photosynthetic apparatus. The polypeptide is Small ribosomal subunit protein bS20c (RPS20) (Spinacia oleracea (Spinach)).